The primary structure comprises 297 residues: Ribosomal RNA small subunit methyltransferase H (297 aa).

S-adenosyl-L-methionine contacts are provided by residues Gly-35–His-37, Asp-55, Phe-82, Asp-100, and Gln-107.

The protein belongs to the methyltransferase superfamily. RsmH family.

It is found in the cytoplasm. The catalysed reaction is cytidine(1402) in 16S rRNA + S-adenosyl-L-methionine = N(4)-methylcytidine(1402) in 16S rRNA + S-adenosyl-L-homocysteine + H(+). Specifically methylates the N4 position of cytidine in position 1402 (C1402) of 16S rRNA. The sequence is that of Ribosomal RNA small subunit methyltransferase H from Chlamydia caviae (strain ATCC VR-813 / DSM 19441 / 03DC25 / GPIC) (Chlamydophila caviae).